The primary structure comprises 292 residues: ATP synthase gamma chain (292 aa).

Belongs to the ATPase gamma chain family. As to quaternary structure, F-type ATPases have 2 components, CF(1) - the catalytic core - and CF(0) - the membrane proton channel. CF(1) has five subunits: alpha(3), beta(3), gamma(1), delta(1), epsilon(1). CF(0) has three main subunits: a, b and c.

The protein resides in the cell inner membrane. Produces ATP from ADP in the presence of a proton gradient across the membrane. The gamma chain is believed to be important in regulating ATPase activity and the flow of protons through the CF(0) complex. This is ATP synthase gamma chain from Brucella anthropi (strain ATCC 49188 / DSM 6882 / CCUG 24695 / JCM 21032 / LMG 3331 / NBRC 15819 / NCTC 12168 / Alc 37) (Ochrobactrum anthropi).